We begin with the raw amino-acid sequence, 476 residues long: Aspartyl/glutamyl-tRNA(Asn/Gln) amidotransferase subunit B (476 aa).

Belongs to the GatB/GatE family. GatB subfamily. Heterotrimer of A, B and C subunits.

The catalysed reaction is L-glutamyl-tRNA(Gln) + L-glutamine + ATP + H2O = L-glutaminyl-tRNA(Gln) + L-glutamate + ADP + phosphate + H(+). The enzyme catalyses L-aspartyl-tRNA(Asn) + L-glutamine + ATP + H2O = L-asparaginyl-tRNA(Asn) + L-glutamate + ADP + phosphate + 2 H(+). Its function is as follows. Allows the formation of correctly charged Asn-tRNA(Asn) or Gln-tRNA(Gln) through the transamidation of misacylated Asp-tRNA(Asn) or Glu-tRNA(Gln) in organisms which lack either or both of asparaginyl-tRNA or glutaminyl-tRNA synthetases. The reaction takes place in the presence of glutamine and ATP through an activated phospho-Asp-tRNA(Asn) or phospho-Glu-tRNA(Gln). In Clostridium botulinum (strain 657 / Type Ba4), this protein is Aspartyl/glutamyl-tRNA(Asn/Gln) amidotransferase subunit B.